The primary structure comprises 1013 residues: Prominin-like protein (1013 aa).

Residues 32–52 (IAYLAICGLSVAIFGFALATL) traverse the membrane as a helical segment. N-linked (GlcNAc...) asparagine glycosylation is found at asparagine 99 and asparagine 116. Helical transmembrane passes span 215 to 235 (CGIC…IAFV), 489 to 509 (VVSL…IFAL), and 535 to 555 (LLLA…VGLF). 4 N-linked (GlcNAc...) asparagine glycosylation sites follow: asparagine 576, asparagine 618, asparagine 803, and asparagine 824. A helical membrane pass occupies residues 852–872 (INGFWVGILLCALLFLPILFV). The segment at 918 to 1013 (ANVPKKRRKA…YYYPGASEQD (96 aa)) is disordered. Asparagine 949 is a glycosylation site (N-linked (GlcNAc...) asparagine). Residues 950 to 963 (RSGGDRGGGGGDGA) show a composition bias toward gly residues.

Belongs to the prominin family.

It localises to the membrane. This is Prominin-like protein from Drosophila melanogaster (Fruit fly).